The sequence spans 136 residues: Putative pre-16S rRNA nuclease (136 aa).

Belongs to the YqgF nuclease family.

It localises to the cytoplasm. In terms of biological role, could be a nuclease involved in processing of the 5'-end of pre-16S rRNA. In Francisella tularensis subsp. tularensis (strain WY96-3418), this protein is Putative pre-16S rRNA nuclease.